Reading from the N-terminus, the 327-residue chain is Malate dehydrogenase (327 aa).

11-17 lines the NAD(+) pocket; the sequence is GAAGQIS. Substrate contacts are provided by Arg92 and Arg98. Residues Asn105, Gln112, and 129 to 131 each bind NAD(+); that span reads VGN. Asn131 and Arg162 together coordinate substrate. The active-site Proton acceptor is the His187.

It belongs to the LDH/MDH superfamily. MDH type 2 family.

The enzyme catalyses (S)-malate + NAD(+) = oxaloacetate + NADH + H(+). Functionally, catalyzes the reversible oxidation of malate to oxaloacetate. This Saccharophagus degradans (strain 2-40 / ATCC 43961 / DSM 17024) protein is Malate dehydrogenase.